We begin with the raw amino-acid sequence, 241 residues long: Nicotinamide riboside kinase (241 aa).

Residue 21–29 (GCSSSGKST) participates in ATP binding. Residues serine 28 and aspartate 47 each contribute to the Mg(2+) site. Aspartate 47 (proton acceptor) is an active-site residue. Substrate is bound by residues 47-50 (DDFY), 67-68 (WD), and aspartate 68. Arginine 163 lines the ATP pocket. Arginine 164 contributes to the substrate binding site. ATP contacts are provided by residues arginine 167, 167-169 (RGG), and 213-215 (DVQ). Residue 169–170 (GY) coordinates substrate.

It belongs to the uridine kinase family. NRK subfamily.

The enzyme catalyses beta-nicotinamide D-riboside + ATP = beta-nicotinamide D-ribonucleotide + ADP + H(+). It catalyses the reaction beta-D-ribosylnicotinate + ATP = nicotinate beta-D-ribonucleotide + ADP + H(+). It participates in cofactor biosynthesis; NAD(+) biosynthesis. Its function is as follows. Catalyzes the phosphorylation of nicotinamide riboside (NR) and nicotinic acid riboside (NaR) to form nicotinamide mononucleotide (NMN) and nicotinic acid mononucleotide (NaMN). The polypeptide is Nicotinamide riboside kinase (NRK1) (Eremothecium gossypii (strain ATCC 10895 / CBS 109.51 / FGSC 9923 / NRRL Y-1056) (Yeast)).